The primary structure comprises 383 residues: Hippurate hydrolase (383 aa).

Belongs to the peptidase M20 family.

It carries out the reaction N-benzoylglycine + H2O = benzoate + glycine. In terms of biological role, cleaves hippuric acid into benzoic acid and glycine. This chain is Hippurate hydrolase, found in Campylobacter jejuni subsp. jejuni serotype O:2 (strain ATCC 700819 / NCTC 11168).